Consider the following 162-residue polypeptide: Caveolin-2 (162 aa).

The Cytoplasmic portion of the chain corresponds to 1–86; sequence MGLETEKADV…FEISKYVMYK (86 aa). Tyrosine 19 is subject to Phosphotyrosine; by SRC. Phosphoserine occurs at positions 20 and 23. Phosphotyrosine; by SRC is present on tyrosine 27. The residue at position 36 (serine 36) is a Phosphoserine. Residues 87–107 constitute an intramembrane region (helical); it reads FLTVFLAIPLAFLAGILFATL. Topologically, residues 108–162 are cytoplasmic; the sequence is SCLHIWIIMPFVKTCLMVLPSVQTIWKSVTDAIIAPLCTSIGRSFSSVSLQLSQD.

It belongs to the caveolin family. As to quaternary structure, monomer or homodimer. Interacts with CAV1; the interaction forms a stable heterooligomeric complex that is required for targeting to lipid rafts and for caveolae formation. Tyrosine phosphorylated forms do not form heterooligomers with the Tyr-19-phosphorylated form existing as a monomer or dimer, and the Tyr-27-form as a monomer only. Interacts (tyrosine phosphorylated form) with the SH2 domain-containing proteins, RASA1, NCK1 and SRC. Interacts (tyrosine phosphorylated form) with INSR, the interaction (Tyr-27-phosphorylated form) is increased on insulin stimulation. Interacts (Tyr-19 phosphorylated form) with MAPK1 (phosphorylated form); the interaction, promoted by insulin, leads to nuclear location and MAPK1 activation. Interacts with STAT3; the interaction is increased on insulin-induced tyrosine phosphorylation leading to STAT activation. Phosphorylated on serine and tyrosine residues. CAV1 promotes phosphorylation on Ser-23 which then targets the complex to the plasma membrane, lipid rafts and caveolae. Phosphorylation on Ser-36 appears to modulate mitosis in endothelial cells. Phosphorylation on both Tyr-19 and Tyr-27 is required for insulin-induced 'Ser-727' phosphorylation of STAT3 and its activation. Phosphorylation on Tyr-19 is required for insulin-induced phosphorylation of MAPK1 and DNA binding of STAT3. Tyrosine phosphorylation is induced by both EGF and insulin (By. similarity).

It is found in the nucleus. The protein localises to the cytoplasm. It localises to the golgi apparatus membrane. The protein resides in the cell membrane. Its subcellular location is the membrane. It is found in the caveola. Functionally, may act as a scaffolding protein within caveolar membranes. Interacts directly with G-protein alpha subunits and can functionally regulate their activity. Acts as an accessory protein in conjunction with CAV1 in targeting to lipid rafts and driving caveolae formation. The Ser-36 phosphorylated form has a role in modulating mitosis in endothelial cells. Positive regulator of cellular mitogenesis of the MAPK signaling pathway. Required for the insulin-stimulated nuclear translocation and activation of MAPK1 and STAT3, and the subsequent regulation of cell cycle progression. The polypeptide is Caveolin-2 (CAV2) (Callithrix jacchus (White-tufted-ear marmoset)).